The following is a 200-amino-acid chain: Imidazole glycerol phosphate synthase subunit HisH (200 aa).

A Glutamine amidotransferase type-1 domain is found at Glu3–Ala200. Catalysis depends on Cys78, which acts as the Nucleophile. Catalysis depends on residues His179 and Glu181.

Heterodimer of HisH and HisF.

It is found in the cytoplasm. The catalysed reaction is 5-[(5-phospho-1-deoxy-D-ribulos-1-ylimino)methylamino]-1-(5-phospho-beta-D-ribosyl)imidazole-4-carboxamide + L-glutamine = D-erythro-1-(imidazol-4-yl)glycerol 3-phosphate + 5-amino-1-(5-phospho-beta-D-ribosyl)imidazole-4-carboxamide + L-glutamate + H(+). It catalyses the reaction L-glutamine + H2O = L-glutamate + NH4(+). Its pathway is amino-acid biosynthesis; L-histidine biosynthesis; L-histidine from 5-phospho-alpha-D-ribose 1-diphosphate: step 5/9. Its function is as follows. IGPS catalyzes the conversion of PRFAR and glutamine to IGP, AICAR and glutamate. The HisH subunit catalyzes the hydrolysis of glutamine to glutamate and ammonia as part of the synthesis of IGP and AICAR. The resulting ammonia molecule is channeled to the active site of HisF. The protein is Imidazole glycerol phosphate synthase subunit HisH of Xylella fastidiosa (strain Temecula1 / ATCC 700964).